A 662-amino-acid chain; its full sequence is Acetyl-coenzyme A synthetase (662 aa).

Residues 197–200 (RKGK) and Thr317 each bind CoA. ATP-binding positions include 393-395 (GEP), 417-422 (DTWWQT), Asp510, and Arg525. CoA is bound at residue Ser533. Arg536 contacts ATP. Residues His549 and Val552 each contribute to the Mg(2+) site. N6-acetyllysine is present on Lys623.

The protein belongs to the ATP-dependent AMP-binding enzyme family. Mg(2+) serves as cofactor. In terms of processing, acetylated. Deacetylation by the SIR2-homolog deacetylase activates the enzyme.

The enzyme catalyses acetate + ATP + CoA = acetyl-CoA + AMP + diphosphate. Catalyzes the conversion of acetate into acetyl-CoA (AcCoA), an essential intermediate at the junction of anabolic and catabolic pathways. AcsA undergoes a two-step reaction. In the first half reaction, AcsA combines acetate with ATP to form acetyl-adenylate (AcAMP) intermediate. In the second half reaction, it can then transfer the acetyl group from AcAMP to the sulfhydryl group of CoA, forming the product AcCoA. This is Acetyl-coenzyme A synthetase from Helicobacter pylori (strain G27).